A 145-amino-acid chain; its full sequence is Large ribosomal subunit protein bL17 (145 aa).

It belongs to the bacterial ribosomal protein bL17 family. Part of the 50S ribosomal subunit. Contacts protein L32.

This is Large ribosomal subunit protein bL17 from Francisella tularensis subsp. holarctica (strain FTNF002-00 / FTA).